The following is a 189-amino-acid chain: UPF0301 protein CTLon_0458 (189 aa).

It belongs to the UPF0301 (AlgH) family.

This is UPF0301 protein CTLon_0458 from Chlamydia trachomatis serovar L2b (strain UCH-1/proctitis).